A 382-amino-acid polypeptide reads, in one-letter code: ATP phosphoribosyltransferase regulatory subunit (382 aa).

This sequence belongs to the class-II aminoacyl-tRNA synthetase family. HisZ subfamily. Heteromultimer composed of HisG and HisZ subunits.

The protein resides in the cytoplasm. The protein operates within amino-acid biosynthesis; L-histidine biosynthesis; L-histidine from 5-phospho-alpha-D-ribose 1-diphosphate: step 1/9. In terms of biological role, required for the first step of histidine biosynthesis. May allow the feedback regulation of ATP phosphoribosyltransferase activity by histidine. This chain is ATP phosphoribosyltransferase regulatory subunit, found in Burkholderia ambifaria (strain ATCC BAA-244 / DSM 16087 / CCUG 44356 / LMG 19182 / AMMD) (Burkholderia cepacia (strain AMMD)).